The following is a 286-amino-acid chain: L-cysteine S-thiosulfotransferase subunit SoxA (286 aa).

The signal sequence occupies residues 1–26 (MTVSKRFLAPVFAMVGGLVLAFSANA). One can recognise a Cytochrome c domain in the interval 80 to 166 (LAVERGADIW…ALTSYIKHQS (87 aa)). Cys-100, Cys-103, His-104, Cys-138, Cys-202, Cys-205, and His-206 together coordinate heme. Arg-243 contributes to the substrate binding site. Cys-247 serves as a coordination point for heme. The Cysteine persulfide intermediate role is filled by Cys-247.

This sequence belongs to the SoxA family. In terms of assembly, heterodimer of SoxA and SoxX. The cofactor is heme. Post-translationally, cysteine persulfide at Cys-247.

It localises to the periplasm. The enzyme catalyses L-cysteinyl-[SoxY protein] + thiosulfate + 2 Fe(III)-[cytochrome c] = S-sulfosulfanyl-L-cysteinyl-[SoxY protein] + 2 Fe(II)-[cytochrome c] + 2 H(+). It catalyses the reaction S-sulfanyl-L-cysteinyl-[SoxY protein] + thiosulfate + 2 Fe(III)-[cytochrome c] = S-(2-sulfodisulfanyl)-L-cysteinyl-[SoxY protein] + 2 Fe(II)-[cytochrome c] + 2 H(+). In terms of biological role, C-type diheme cytochrome, which is part of the SoxAX cytochrome complex involved in sulfur oxidation. The SoxAX complex catalyzes the formation of a heterodisulfide bond between the conserved cysteine residue on a sulfur carrier SoxYZ complex subunit SoxY and thiosulfate or other inorganic sulfur substrates. This leads to the liberation of two electrons, which may be transferred from the SoxAX complex to another cytochrome c that then channels them into the respiratory electron transport chain. Some electrons may be used for reductive CO(2) fixation. This is L-cysteine S-thiosulfotransferase subunit SoxA from Pseudaminobacter salicylatoxidans.